The following is a 399-amino-acid chain: Argininosuccinate synthase (399 aa).

9-17 (AYSGGLDTS) provides a ligand contact to ATP. Residue tyrosine 87 coordinates L-citrulline. Glycine 117 lines the ATP pocket. Positions 119, 123, and 124 each coordinate L-aspartate. Position 123 (asparagine 123) interacts with L-citrulline. Arginine 127, serine 176, serine 185, glutamate 261, and tyrosine 273 together coordinate L-citrulline.

It belongs to the argininosuccinate synthase family. Type 1 subfamily. Homotetramer.

It is found in the cytoplasm. It carries out the reaction L-citrulline + L-aspartate + ATP = 2-(N(omega)-L-arginino)succinate + AMP + diphosphate + H(+). Its pathway is amino-acid biosynthesis; L-arginine biosynthesis; L-arginine from L-ornithine and carbamoyl phosphate: step 2/3. The protein is Argininosuccinate synthase of Chlorobium chlorochromatii (strain CaD3).